A 96-amino-acid polypeptide reads, in one-letter code: uncharacterized protein (96 aa).

Residues 9–86 (EELKSQAQVY…NKYADTVAER (78 aa)) are a coiled coil.

This sequence belongs to the WXG100 family. sagEsxA-like subfamily.

This is an uncharacterized protein from Clostridium acetobutylicum (strain ATCC 824 / DSM 792 / JCM 1419 / IAM 19013 / LMG 5710 / NBRC 13948 / NRRL B-527 / VKM B-1787 / 2291 / W).